The following is a 96-amino-acid chain: Co-chaperonin GroES (96 aa).

Belongs to the GroES chaperonin family. Heptamer of 7 subunits arranged in a ring. Interacts with the chaperonin GroEL.

The protein localises to the cytoplasm. Together with the chaperonin GroEL, plays an essential role in assisting protein folding. The GroEL-GroES system forms a nano-cage that allows encapsulation of the non-native substrate proteins and provides a physical environment optimized to promote and accelerate protein folding. GroES binds to the apical surface of the GroEL ring, thereby capping the opening of the GroEL channel. This is Co-chaperonin GroES from Trichlorobacter lovleyi (strain ATCC BAA-1151 / DSM 17278 / SZ) (Geobacter lovleyi).